The chain runs to 567 residues: 2-succinyl-5-enolpyruvyl-6-hydroxy-3-cyclohexene-1-carboxylate synthase (567 aa).

The protein belongs to the TPP enzyme family. MenD subfamily. As to quaternary structure, homodimer. Mg(2+) is required as a cofactor. It depends on Mn(2+) as a cofactor. Thiamine diphosphate serves as cofactor.

The catalysed reaction is isochorismate + 2-oxoglutarate + H(+) = 5-enolpyruvoyl-6-hydroxy-2-succinyl-cyclohex-3-ene-1-carboxylate + CO2. Its pathway is quinol/quinone metabolism; 1,4-dihydroxy-2-naphthoate biosynthesis; 1,4-dihydroxy-2-naphthoate from chorismate: step 2/7. It participates in quinol/quinone metabolism; menaquinone biosynthesis. In terms of biological role, catalyzes the thiamine diphosphate-dependent decarboxylation of 2-oxoglutarate and the subsequent addition of the resulting succinic semialdehyde-thiamine pyrophosphate anion to isochorismate to yield 2-succinyl-5-enolpyruvyl-6-hydroxy-3-cyclohexene-1-carboxylate (SEPHCHC). The polypeptide is 2-succinyl-5-enolpyruvyl-6-hydroxy-3-cyclohexene-1-carboxylate synthase (Yersinia pseudotuberculosis serotype I (strain IP32953)).